Here is a 215-residue protein sequence, read N- to C-terminus: Pyridoxine/pyridoxamine 5'-phosphate oxidase (215 aa).

Substrate contacts are provided by residues 9–12 and K67; that span reads RKEY. Residues 62–67, 77–78, K84, and Q106 contribute to the FMN site; these read RIVLLK and YT. The substrate site is built by Y124, R128, and S132. FMN contacts are provided by residues 141–142 and W187; that span reads QS. 193–195 contributes to the substrate binding site; sequence RLH. R197 contributes to the FMN binding site.

It belongs to the pyridoxamine 5'-phosphate oxidase family. As to quaternary structure, homodimer. FMN is required as a cofactor.

The catalysed reaction is pyridoxamine 5'-phosphate + O2 + H2O = pyridoxal 5'-phosphate + H2O2 + NH4(+). The enzyme catalyses pyridoxine 5'-phosphate + O2 = pyridoxal 5'-phosphate + H2O2. It functions in the pathway cofactor metabolism; pyridoxal 5'-phosphate salvage; pyridoxal 5'-phosphate from pyridoxamine 5'-phosphate: step 1/1. Its pathway is cofactor metabolism; pyridoxal 5'-phosphate salvage; pyridoxal 5'-phosphate from pyridoxine 5'-phosphate: step 1/1. Its function is as follows. Catalyzes the oxidation of either pyridoxine 5'-phosphate (PNP) or pyridoxamine 5'-phosphate (PMP) into pyridoxal 5'-phosphate (PLP). This is Pyridoxine/pyridoxamine 5'-phosphate oxidase from Cytophaga hutchinsonii (strain ATCC 33406 / DSM 1761 / CIP 103989 / NBRC 15051 / NCIMB 9469 / D465).